A 651-amino-acid polypeptide reads, in one-letter code: Probable potassium transport system protein Kup (651 aa).

12 helical membrane-spanning segments follow: residues Leu-41 to Phe-61, Val-82 to Val-102, Leu-130 to Pro-150, Ile-163 to Leu-183, Val-194 to Leu-214, Phe-235 to Thr-255, Trp-276 to Leu-296, Met-309 to Ala-329, Ile-366 to Phe-386, Ala-395 to Met-415, Ala-426 to Ile-446, and Glu-450 to Val-470.

It belongs to the HAK/KUP transporter (TC 2.A.72) family.

It is found in the cell inner membrane. The enzyme catalyses K(+)(in) + H(+)(in) = K(+)(out) + H(+)(out). Its function is as follows. Transport of potassium into the cell. Likely operates as a K(+):H(+) symporter. This chain is Probable potassium transport system protein Kup, found in Brucella ovis (strain ATCC 25840 / 63/290 / NCTC 10512).